The sequence spans 154 residues: Ubiquitin-like protein 4A-A (154 aa).

Positions Met1–Glu76 constitute a Ubiquitin-like domain.

Component of the BAT3 complex.

It is found in the cytoplasm. Its subcellular location is the cytosol. Functionally, component of the BAT3 complex, a multiprotein complex involved in the post-translational delivery of tail-anchored (TA) membrane proteins to the endoplasmic reticulum membrane. TA membrane proteins, also named type II transmembrane proteins, contain a single C-terminal transmembrane region. In Oncorhynchus mykiss (Rainbow trout), this protein is Ubiquitin-like protein 4A-A (ubl4aa).